Reading from the N-terminus, the 287-residue chain is Protease HtpX (287 aa).

A run of 2 helical transmembrane segments spans residues 4–24 and 33–53; these read IFLL…VMSI and GGLL…SLAI. His139 contributes to the Zn(2+) binding site. Residue Glu140 is part of the active site. A Zn(2+)-binding site is contributed by His143. The next 2 helical transmembrane spans lie at 154 to 174 and 195 to 215; these read LIQG…AGII and AVVF…VAYF. Glu220 is a Zn(2+) binding site.

The protein belongs to the peptidase M48B family. Requires Zn(2+) as cofactor.

It is found in the cell inner membrane. The sequence is that of Protease HtpX from Shewanella oneidensis (strain ATCC 700550 / JCM 31522 / CIP 106686 / LMG 19005 / NCIMB 14063 / MR-1).